The chain runs to 913 residues: SUN domain-containing protein 1 (913 aa).

Residues 1 to 139 (MDFSRLHTYT…VLRHPVLDES (139 aa)) are LMNA-binding. At 1 to 415 (MDFSRLHTYT…LTRCLRNICK (415 aa)) the chain is on the nuclear side. Phosphoserine occurs at positions 48 and 66. Positions 69–81 (SQAIDSHISTSRA) are enriched in polar residues. The interval 69 to 120 (SQAIDSHISTSRATPAKGRETRTVKQRRSASKPAFSINHLSGKGLSSSTSHD) is disordered. The segment covering 108 to 120 (LSGKGLSSSTSHD) has biased composition (low complexity). Residue serine 139 is modified to Phosphoserine. The SYNE2-binding stretch occupies residues 209–302 (SRVYSRDRTL…MTAGELSRVD (94 aa)). Residues 223–302 (VSFYLDRTLW…MTAGELSRVD (80 aa)) are EMD-binding. The chain crosses the membrane as a helical span at residues 416–436 (VFVLLLPLLLLLGAGVSLWGQ). Topologically, residues 437–913 (GNFFSLLPVL…RFRVHGEPIQ (477 aa)) are perinuclear space. The segment at 456 to 485 (RVDDSKGMHRPGPLPPSPPPKVDHKASQWP) is disordered. 2 coiled-coil regions span residues 491-533 (GQKV…EGLS) and 563-638 (HHDH…CEQA). Positions 703 to 913 (TSEAIVSAVN…RFRVHGEPIQ (211 aa)) are sufficient for interaction with SYNE1 and SYNE2. The SUN domain maps to 751-912 (GGSILSTRCS…YRFRVHGEPI (162 aa)).

As to quaternary structure, core component of the LINC complex which is composed of inner nuclear membrane SUN domain-containing proteins coupled to outer nuclear membrane KASH domain-containing nesprins. SUN and KASH domain-containing proteins seem to bind each other promiscuously; however, differentially expression of LINC complex constituents is giving rise to specific assemblies. At least SUN1/2-containing core LINC complexes are proposed to be hexameric composed of three protomers of each KASH and SUN domain-containing protein. Interacts with KASH5 (via the last 22 amino acids); this interaction mediates KASH5 telomere localization by forming a SUN1:KASH5 LINC complex. Isoform 5 is proposed to form a non-nuclear spermatogenesis-specific LINC complex with SYNE3 during sperm head formation. Interacts with SYNE2 and SYNE1; probably forming respective LINC complexes. Interacts with A-type lamin with a strong preference for unprocessed A-type lamin compared with the mature protein. Interaction with lamins B1 and C is hardly detectable. Interacts with NAT10. Interacts with EMD and TSNAX. Associates with the nuclear pore complex (NPC). Interacts with CCDC79/TERB1; promoting the accumulation of the LINC complex complexes at the telomere-nuclear envelope attachment sites. Interacts with IRAG2. Interacts (via KASH domain) with TMEM258. Post-translationally, the disulfide bond with KASH domain-containing nesprins is required for stability of the respective LINC complexes under tensile forces. Widely expressed. Expressed in cochlear outer hair cells (at protein level). Seven isoforms are expressed in testis including testis-specific isoform 5. Isoform 5 is the only isoform expressed at the end of sperm differentiation. Six isoforms are expressed in muscle, heart and brain, four isoforms in kidney and three isoforms in liver.

Its subcellular location is the nucleus inner membrane. It is found in the cytoplasmic vesicle. The protein localises to the secretory vesicle. It localises to the acrosome outer membrane. Functionally, as a component of the LINC (LInker of Nucleoskeleton and Cytoskeleton) complex involved in the connection between the nuclear lamina and the cytoskeleton. The nucleocytoplasmic interactions established by the LINC complex play an important role in the transmission of mechanical forces across the nuclear envelope and in nuclear movement and positioning. Required for interkinetic nuclear migration (INM) and essential for nucleokinesis and centrosome-nucleus coupling during radial neuronal migration in the cerebral cortex and during glial migration. Involved in telomere attachment to nuclear envelope in the prophase of meiosis implicating a SUN1/2:KASH5 LINC complex in which SUN1 and SUN2 seem to act at least partial redundantly. Required for gametogenesis and involved in selective gene expression of coding and non-coding RNAs needed for gametogenesis. Helps to define the distribution of nuclear pore complexes (NPCs). Required for efficient localization of SYNE4 in the nuclear envelope. May be involved in nuclear remodeling during sperm head formation in spermatogenesis. May play a role in DNA repair by suppressing non-homologous end joining repair to facilitate the repair of DNA cross-links. In terms of biological role, isoform 5 may be involved in nuclear remodeling during sperm head formation in spermatogenesis. A probable SUN1 isoform 5:SYNE3 LINC complex may tether spermatid nuclei to anterior cytoskeletal structures such as actin filaments present at membraneous junctions of spermatids and Sertoli cells. The polypeptide is SUN domain-containing protein 1 (Mus musculus (Mouse)).